The sequence spans 389 residues: Chalcone synthase H2 (389 aa).

C164 is a catalytic residue.

It belongs to the thiolase-like superfamily. Chalcone/stilbene synthases family.

It localises to the cytoplasm. It catalyses the reaction (E)-4-coumaroyl-CoA + 3 malonyl-CoA + 3 H(+) = 2',4,4',6'-tetrahydroxychalcone + 3 CO2 + 4 CoA. The protein operates within secondary metabolite biosynthesis; flavonoid biosynthesis. Involved in the biosynthesis of prenylated phenolics natural products which contribute to the bitter taste of beer and display broad biological activities. Chalcone synthase that can use 4-coumaroyl-CoA to produce 4,2',4',6'-tetrahydroxychalcone (also termed naringenin-chalcone or chalcone) which can, under specific conditions, spontaneously isomerize into naringenin. This chain is Chalcone synthase H2, found in Humulus lupulus (European hop).